Reading from the N-terminus, the 424-residue chain is Folate-like transporter 2 (424 aa).

The N-linked (GlcNAc...) asparagine glycan is linked to Asn-35. 6 consecutive transmembrane segments (helical) span residues 48–68, 71–91, 99–119, 136–156, 164–184, and 233–253; these read IWTY…DVFL, PLLV…VFGK, LEVF…YIYV, ALLV…GLNW, IISL…PGVE, and PLIL…YQVT. Asn-254 carries N-linked (GlcNAc...) asparagine glycosylation. The next 4 membrane-spanning stretches (helical) occupy residues 299 to 319, 324 to 344, 361 to 381, and 392 to 412; these read WGDL…FWMS, IVVL…TTTI, LFGI…AVVI, and FVVY…IFGI.

It belongs to the reduced folate carrier (RFC) transporter (TC 2.A.48) family.

Its subcellular location is the membrane. In terms of biological role, unlike folt-1, does not appear to act as a folate transporter. The chain is Folate-like transporter 2 (folt-2) from Caenorhabditis elegans.